The following is a 225-amino-acid chain: uncharacterized protein (225 aa).

This is an uncharacterized protein from Bacillus subtilis (strain 168).